We begin with the raw amino-acid sequence, 199 residues long: Achaete-scute homolog 1 (199 aa).

Residues 37 to 56 are disordered; sequence PAEEQQASKAKPIKRQRSAS. Residues 81-133 enclose the bHLH domain; sequence AAVARRNERERNRVKLVNLGFATLREHVPNGAANKKMSKVETLRSAVEYIRAL. Over residues 162-179 the composition is skewed to polar residues; the sequence is HDMNSMAGSPVSSYSSDE. The interval 162–189 is disordered; the sequence is HDMNSMAGSPVSSYSSDEGSYDPLSPEE.

Efficient DNA binding requires dimerization with another bHLH protein. In terms of tissue distribution, neuronal precursor cells.

Its subcellular location is the nucleus. Its function is as follows. Transcription factor that plays a key role in neuronal differentiation: acts as a pioneer transcription factor, accessing closed chromatin to allow other factors to bind and activate neural pathways. Directly binds the E box motif (5'-CANNTG-3') on promoters and promotes transcription of neuronal genes. The combination of three transcription factors, ASCL1, POU3F2/BRN2 and MYT1L, is sufficient to reprogram fibroblasts and other somatic cells into induced neuronal (iN) cells in vitro. In Xenopus laevis (African clawed frog), this protein is Achaete-scute homolog 1 (ascl1).